The following is a 289-amino-acid chain: Protein charybde (289 aa).

Positions 119-142 (TAHHPGHGHGPGPSPMPASPLQST) are disordered.

Belongs to the DDIT4 family.

The protein localises to the cytoplasm. Functionally, inhibits cell growth by regulating the Tor pathway upstream of the Tsc1-Tsc2 complex and downstream of Akt1. Acts as a cell death activator during head development. The polypeptide is Protein charybde (chrb) (Drosophila pseudoobscura pseudoobscura (Fruit fly)).